A 288-amino-acid chain; its full sequence is 4-diphosphocytidyl-2-C-methyl-D-erythritol kinase (288 aa).

Lys13 is a catalytic residue. 96–106 (PMGGGIGGGSS) contacts ATP. Asp138 is a catalytic residue.

Belongs to the GHMP kinase family. IspE subfamily.

It carries out the reaction 4-CDP-2-C-methyl-D-erythritol + ATP = 4-CDP-2-C-methyl-D-erythritol 2-phosphate + ADP + H(+). Its pathway is isoprenoid biosynthesis; isopentenyl diphosphate biosynthesis via DXP pathway; isopentenyl diphosphate from 1-deoxy-D-xylulose 5-phosphate: step 3/6. Its function is as follows. Catalyzes the phosphorylation of the position 2 hydroxy group of 4-diphosphocytidyl-2C-methyl-D-erythritol. This Aliivibrio fischeri (strain MJ11) (Vibrio fischeri) protein is 4-diphosphocytidyl-2-C-methyl-D-erythritol kinase.